Reading from the N-terminus, the 387-residue chain is Succinate--CoA ligase [ADP-forming] subunit beta (387 aa).

An ATP-grasp domain is found at 9–245 (KDLLESYGLK…KSQENAKELK (237 aa)). ATP-binding positions include Lys-46, 53-55 (GRG), Glu-100, Tyr-103, and Glu-108. Mg(2+)-binding residues include Asn-200 and Asp-214. Substrate-binding positions include Asn-265 and 322-324 (GIV).

Belongs to the succinate/malate CoA ligase beta subunit family. Heterotetramer of two alpha and two beta subunits. Requires Mg(2+) as cofactor.

The enzyme catalyses succinate + ATP + CoA = succinyl-CoA + ADP + phosphate. It catalyses the reaction GTP + succinate + CoA = succinyl-CoA + GDP + phosphate. It functions in the pathway carbohydrate metabolism; tricarboxylic acid cycle; succinate from succinyl-CoA (ligase route): step 1/1. In terms of biological role, succinyl-CoA synthetase functions in the citric acid cycle (TCA), coupling the hydrolysis of succinyl-CoA to the synthesis of either ATP or GTP and thus represents the only step of substrate-level phosphorylation in the TCA. The beta subunit provides nucleotide specificity of the enzyme and binds the substrate succinate, while the binding sites for coenzyme A and phosphate are found in the alpha subunit. The protein is Succinate--CoA ligase [ADP-forming] subunit beta of Francisella tularensis subsp. tularensis (strain FSC 198).